A 632-amino-acid polypeptide reads, in one-letter code: Chaperone protein HtpG (632 aa).

An a; substrate-binding region spans residues 1–339; sequence MTQQTMSFQA…SSDLPLNVSR (339 aa). Residues 340 to 559 are b; that stretch reads EILQESRDVK…DNDMSGYLQR (220 aa). Residues 560–632 are c; it reads MLKAAGQSAP…TNALLLSRAA (73 aa).

It belongs to the heat shock protein 90 family. Homodimer.

It localises to the cytoplasm. In terms of biological role, molecular chaperone. Has ATPase activity. The protein is Chaperone protein HtpG of Burkholderia pseudomallei (strain 1106a).